The sequence spans 86 residues: Kappa-theraphotoxin-Cg1c (86 aa).

The signal sequence occupies residues 1–21 (MKVSVLITLAVLGVMFVWASA). A propeptide spanning residues 22 to 50 (AELEERGSDHRDSPAWLKSMERIFQSEER) is cleaved from the precursor. Intrachain disulfides connect Cys-52/Cys-66, Cys-59/Cys-71, and Cys-65/Cys-78.

It belongs to the neurotoxin 10 (Hwtx-1) family. 28 (Jztx-11) subfamily. In terms of tissue distribution, expressed by the venom gland.

It is found in the secreted. Functionally, probable ion channel inhibitor. In Chilobrachys guangxiensis (Chinese earth tiger tarantula), this protein is Kappa-theraphotoxin-Cg1c.